Reading from the N-terminus, the 335-residue chain is Taste receptor type 2 member 119 (335 aa).

The Extracellular segment spans residues 1 to 7 (MMEGHIL). Residues 8–28 (FFFLVVMVQFVTGVLANGLIV) traverse the membrane as a helical segment. Topologically, residues 29–43 (VVHAIDLIMWKKMAP) are cytoplasmic. The helical transmembrane segment at 44–64 (LDLLLFCLATSRIILQLCILF) threads the bilayer. At 65–81 (AQLCLFSLVRHTLFEDN) the chain is on the extracellular side. Asn-81 carries an N-linked (GlcNAc...) asparagine glycan. A helical membrane pass occupies residues 82–102 (ITFVFIINELSLWFATWLGVF). The Cytoplasmic portion of the chain corresponds to 103-124 (YCAKIATIPHPLFLWLKMRISR). Residues 125–145 (LVPWLILGSVLYVIITTFIHS) form a helical membrane-spanning segment. The Extracellular portion of the chain corresponds to 146–176 (RETSAILKPIFISLFPKNATQVGTGHATLLS). Asn-163 carries an N-linked (GlcNAc...) asparagine glycan. Residues 177-197 (VLVLGLTLPLFIFTVAVLLLI) form a helical membrane-spanning segment. Residues 198–224 (YSLWNYSRQMRTMVGTREYSGHAHISA) lie on the Cytoplasmic side of the membrane. Residues 225-245 (MLSILSFLILYLSHYMVAVLI) traverse the membrane as a helical segment. The Extracellular portion of the chain corresponds to 246 to 256 (STQVLYLGSRT). A helical transmembrane segment spans residues 257–277 (FVFCLLVIGMYPSIHSIVLIL). The Cytoplasmic portion of the chain corresponds to 278 to 335 (GNPKLKRNAKMFIVHCKCCHCTRAWVTSRSPRLSDLPVPPTHPSANKTSCSEACIMPS). The segment at 308-327 (PRLSDLPVPPTHPSANKTSC) is disordered.

Belongs to the G-protein coupled receptor T2R family. Expressed in subsets of taste receptor cells of the tongue and palate epithelium and exclusively in gustducin-positive cells. Expressed in the duodenum, antrum and fundus (part of the stomach).

The protein resides in the membrane. Its function is as follows. Gustducin-coupled receptor implicated in the perception of bitter compounds in the oral cavity and the gastrointestinal tract. Signals through PLCB2 and the calcium-regulated cation channel TRPM5. The polypeptide is Taste receptor type 2 member 119 (Tas2r119) (Rattus norvegicus (Rat)).